Reading from the N-terminus, the 92-residue chain is SPbeta prophage-derived uncharacterized protein YopY (92 aa).

This is SPbeta prophage-derived uncharacterized protein YopY (yopY) from Bacillus subtilis (strain 168).